Here is a 415-residue protein sequence, read N- to C-terminus: Fructose-like permease IIC component (415 aa).

Over 1-46 (MAIKKRSATVVPGASGAAAAVKNPQASKSSFWGELPQHVMSGISRM) the chain is Cytoplasmic. One can recognise a PTS EIIC type-2 domain in the interval 35 to 410 (LPQHVMSGIS…RLMMFRKGKL (376 aa)). Residues 47-67 (VPTLIMGGVILAFSQLIAYSW) form a helical membrane-spanning segment. Residues 68–101 (LKIPAEIGIMDALNSGKFSGFDLSLLKFAWLSQS) are Periplasmic-facing. The chain crosses the membrane as a helical span at residues 102-122 (FGGVLFGFAIPMFAAFVANSI). At 123-126 (GGKL) the chain is on the cytoplasmic side. Residues 127-147 (AFPAGFIGGLMSTQPTQLLNF) traverse the membrane as a helical segment. Topologically, residues 148–157 (DPSTMQWATS) are periplasmic. The chain crosses the membrane as a helical span at residues 158-178 (SPVPSTFIGALIISIVAGYLV). The Cytoplasmic segment spans residues 179–197 (KWMNQKIQLPDFLLAFKTT). Residues 198–218 (FLLPILSAIFVMLAMYYVITP) form a helical membrane-spanning segment. Residues 219-237 (FGGWINGGIRTVLTAAGEK) lie on the Periplasmic side of the membrane. A helical membrane pass occupies residues 238–258 (GALMYAMGIAAATAIDLGGPI). The Cytoplasmic segment spans residues 259 to 276 (NKAAGFVAFSFTTDHVLP). A helical transmembrane segment spans residues 277–297 (VTARSIAIVIPPIGLGLATII). Residues 298 to 318 (DRRLTGKRLFNAQLYPQGKTA) are Periplasmic-facing. The helical transmembrane segment at 319-339 (MFLAFMGISEGAIPFALESPI) threads the bilayer. The Cytoplasmic portion of the chain corresponds to 340-341 (TA). A helical membrane pass occupies residues 342-362 (IPSYMVGAIVGSTAAVWLGAV). Residues 363–378 (QWFPESAIWAWPLVTN) are Periplasmic-facing. The helical transmembrane segment at 379-399 (LGVYMAGIALGAVITALMVVF) threads the bilayer. Residues 400–415 (LRLMMFRKGKLLIDSL) lie on the Cytoplasmic side of the membrane.

Its subcellular location is the cell inner membrane. Its function is as follows. The phosphoenolpyruvate-dependent sugar phosphotransferase system (PTS), a major carbohydrate active -transport system, catalyzes the phosphorylation of incoming sugar substrates concomitant with their translocation across the cell membrane. This is Fructose-like permease IIC component (fryC) from Escherichia coli O157:H7.